The sequence spans 1187 residues: uncharacterized protein (1187 aa).

5 disordered regions span residues 302 to 405 (QKSQ…KPVG), 419 to 451 (QAFSPLLSSAGPGSPAAETKTEETTLGHGRASK), 511 to 551 (KAPG…LRLE), 1095 to 1134 (KSQRTPQGEQSRNMWAGLLSPEPGQSGDTEEVRGTPKLPD), and 1148 to 1187 (PHLPKQSKASRPTGGSFSSEGTGSQTSLEDSPHTSPPASL). Positions 321–333 (LPLSGPAGAPPLG) are enriched in low complexity. Over residues 352–361 (SRRKARHKAS) the composition is skewed to basic residues. Composition is skewed to low complexity over residues 422-435 (SPLLSSAGPGSPAA) and 517-534 (GTTLPTTSGSGPLSGEPP). Over residues 1096–1107 (SQRTPQGEQSRN) the composition is skewed to polar residues. A compositionally biased stretch (low complexity) spans 1160–1174 (TGGSFSSEGTGSQTS).

This is an uncharacterized protein from Mus musculus (Mouse).